The chain runs to 254 residues: Alcohol dehydrogenase (254 aa).

9–32 is an NAD(+) binding site; that stretch reads IFVAGLGGIGLDTSRELVKRDLKN. Residue Ser-138 coordinates substrate. The Proton acceptor role is filled by Tyr-151.

This sequence belongs to the short-chain dehydrogenases/reductases (SDR) family. Homodimer.

The catalysed reaction is a primary alcohol + NAD(+) = an aldehyde + NADH + H(+). It catalyses the reaction a secondary alcohol + NAD(+) = a ketone + NADH + H(+). In Drosophila paulistorum (Fruit fly), this protein is Alcohol dehydrogenase (Adh).